A 356-amino-acid chain; its full sequence is 3-dehydroquinate synthase (356 aa).

Residues 71-76 (EGEASK), 105-109 (GVTGD), 129-130 (TS), Lys-142, and Lys-151 contribute to the NAD(+) site. Zn(2+)-binding residues include Glu-184, His-247, and His-264.

It belongs to the sugar phosphate cyclases superfamily. Dehydroquinate synthase family. Requires Co(2+) as cofactor. Zn(2+) serves as cofactor. The cofactor is NAD(+).

Its subcellular location is the cytoplasm. It carries out the reaction 7-phospho-2-dehydro-3-deoxy-D-arabino-heptonate = 3-dehydroquinate + phosphate. The protein operates within metabolic intermediate biosynthesis; chorismate biosynthesis; chorismate from D-erythrose 4-phosphate and phosphoenolpyruvate: step 2/7. Catalyzes the conversion of 3-deoxy-D-arabino-heptulosonate 7-phosphate (DAHP) to dehydroquinate (DHQ). The sequence is that of 3-dehydroquinate synthase from Lactococcus lactis subsp. cremoris (strain SK11).